Reading from the N-terminus, the 530-residue chain is Phosphoenolpyruvate carboxykinase (ATP) (530 aa).

Substrate-binding residues include R58, Y195, and K201. ATP-binding positions include K201, H220, and 236–244; that span reads GLSGTGKTT. Mn(2+) is bound by residues K201 and H220. Mn(2+) is bound at residue D257. ATP contacts are provided by residues E285, R321, 440-441, and T446; that span reads RI. R321 serves as a coordination point for substrate.

It belongs to the phosphoenolpyruvate carboxykinase (ATP) family. It depends on Mn(2+) as a cofactor.

The protein localises to the cytoplasm. The enzyme catalyses oxaloacetate + ATP = phosphoenolpyruvate + ADP + CO2. It functions in the pathway carbohydrate biosynthesis; gluconeogenesis. In terms of biological role, involved in the gluconeogenesis. Catalyzes the conversion of oxaloacetate (OAA) to phosphoenolpyruvate (PEP) through direct phosphoryl transfer between the nucleoside triphosphate and OAA. The polypeptide is Phosphoenolpyruvate carboxykinase (ATP) (Staphylococcus aureus (strain Mu3 / ATCC 700698)).